We begin with the raw amino-acid sequence, 225 residues long: Transmembrane protein C16orf54 homolog (225 aa).

The chain crosses the membrane as a helical span at residues 32 to 52; sequence PCIPIMLGLASLTAFFIITTA. Disordered stretches follow at residues 106–163 and 178–200; these read DRAP…ERPH and EAGL…EPDW. Threonine 113 and threonine 117 each carry phosphothreonine. The span at 122–140 shows a compositional bias: low complexity; that stretch reads ATAPPATSAPYSSLSSLVP. Residue serine 195 is modified to Phosphoserine.

It localises to the membrane. The chain is Transmembrane protein C16orf54 homolog from Mus musculus (Mouse).